The primary structure comprises 155 residues: Ribosomal RNA large subunit methyltransferase H (155 aa).

S-adenosyl-L-methionine contacts are provided by residues leucine 72, glycine 103, and 122 to 127; that span reads LSDLTL.

It belongs to the RNA methyltransferase RlmH family. As to quaternary structure, homodimer.

It localises to the cytoplasm. The enzyme catalyses pseudouridine(1915) in 23S rRNA + S-adenosyl-L-methionine = N(3)-methylpseudouridine(1915) in 23S rRNA + S-adenosyl-L-homocysteine + H(+). Its function is as follows. Specifically methylates the pseudouridine at position 1915 (m3Psi1915) in 23S rRNA. The polypeptide is Ribosomal RNA large subunit methyltransferase H (Acidovorax ebreus (strain TPSY) (Diaphorobacter sp. (strain TPSY))).